A 917-amino-acid polypeptide reads, in one-letter code: Nitrate reductase [NADH] 2 (917 aa).

Positions 1–72 (MAASVDNRQY…SEDENETHNS (72 aa)) are disordered. Residues 37–47 (AHQNQTTNQTV) are compositionally biased toward polar residues. Residues 57–67 (DDEDVSSEDEN) show a composition bias toward acidic residues. Position 191 (Cys-191) interacts with Mo-molybdopterin. The 76-residue stretch at 542–617 (AKMYSMSEVK…LEDYRIGELI (76 aa)) folds into the Cytochrome b5 heme-binding domain. Heme contacts are provided by His-577 and His-600. An FAD-binding FR-type domain is found at 660-772 (RAKVPVQLVE…KGPLGHVEYL (113 aa)). Residues 712–715 (RAYT), 729–733 (VVKIY), Phe-734, Phe-741, 746–748 (LMS), and Thr-799 contribute to the FAD site.

It belongs to the nitrate reductase family. Homodimer. It depends on FAD as a cofactor. Heme serves as cofactor. Mo-molybdopterin is required as a cofactor. In terms of tissue distribution, root, leaf, and shoot.

It carries out the reaction nitrite + NAD(+) + H2O = nitrate + NADH + H(+). Nitrate reductase is a key enzyme involved in the first step of nitrate assimilation in plants, fungi and bacteria. The chain is Nitrate reductase [NADH] 2 (NIA2) from Arabidopsis thaliana (Mouse-ear cress).